A 508-amino-acid chain; its full sequence is Catalase (508 aa).

Active-site residues include histidine 63 and asparagine 136. Tyrosine 346 contributes to the heme binding site.

The protein belongs to the catalase family. Homohexamer. The cofactor is heme.

The protein localises to the cytoplasm. The catalysed reaction is 2 H2O2 = O2 + 2 H2O. Its function is as follows. Decomposes hydrogen peroxide into water and oxygen; serves to protect cells from the toxic effects of hydrogen peroxide. This Haemophilus influenzae (strain ATCC 51907 / DSM 11121 / KW20 / Rd) protein is Catalase (katA).